The primary structure comprises 463 residues: MAIAENYEDVLKGKYPAKAHAKKVAEWIIAKGGDKNGTIYLEAQKQKLNEDNDGEAPFRQRRYFFYLSGCELPDSYLTYEIATEKLTLFIPPVEPDEVIWSGLPMSPEEAKEKYDIDQCLTTKDVNAHLTSTSESAQSTIYAIPEQVSDHITFISYKEKEFKQLKPAIEYCRVIKSDYEIALIRKANIISTAAHEAVMKAASTAKNECELEAVFLKACVERNAKNQAYHSIVAAGEHAATLHYVHNAAPISDQNLLLLDAGCEVDCYASDITRTFPLKGKFTTESLAIYKIVLDMQHQCINALKEGVVWDSVHELAHKVAIKGLLELGILKGDAEEIFTKRISVAFFPHGLGHYLGMDTHDTGGNPNYADKDVMFRYLRTRGSLPERSVITVEPGVYFCRFIIEPYLKDEEKKKYIDESVLEKYWSVGGVRIEDNVLVTKNGFENLTPTPKEIDDITKLILST.

Mn(2+) contacts are provided by D259, D270, E393, and E433.

It belongs to the peptidase M24B family. Mn(2+) is required as a cofactor.

It catalyses the reaction Release of any N-terminal amino acid, including proline, that is linked to proline, even from a dipeptide or tripeptide.. Its function is as follows. Catalyzes the removal of a penultimate prolyl residue from the N-termini of peptides. This Pyrenophora tritici-repentis (strain Pt-1C-BFP) (Wheat tan spot fungus) protein is Probable Xaa-Pro aminopeptidase pepP (pepP).